The following is a 905-amino-acid chain: Toll-like receptor 3 (905 aa).

The first 25 residues, 1–25, serve as a signal peptide directing secretion; sequence MKGCSSYLMYSFGGLLSLWILLVSS. One can recognise an LRRNT domain in the interval 26–52; the sequence is TNQCTVRYNVADCSHLKLTHIPDDLPS. Residues 26–705 lie on the Lumenal side of the membrane; the sequence is TNQCTVRYNV…SCKDSAPFEL (680 aa). A disulfide bond links cysteine 29 and cysteine 38. N-linked (GlcNAc...) asparagine glycans are attached at residues asparagine 53, asparagine 58, and asparagine 71. LRR repeat units lie at residues 53-74, 77-98, 101-122, 125-146, 149-170, and 173-196; these read NITV…NFTR, QLAI…LCQI, LLKV…TFVF, NLTE…PFKN, NLIK…TGVQ, and NLQE…EFLG. Cysteine 96 and cysteine 123 are joined by a disulfide. Asparagine 125 carries an N-linked (GlcNAc...) asparagine glycan. Asparagine 197 carries N-linked (GlcNAc...) asparagine glycosylation. One copy of the LRR 7 repeat lies at 199 to 220; it reads SLRKLDLSSNPLKEFSPGCFQT. N-linked (GlcNAc...) asparagine glycosylation is found at asparagine 248, asparagine 253, asparagine 276, and asparagine 292. 15 LRR repeats span residues 250 to 271, 276 to 297, 300 to 321, 324 to 345, 357 to 378, 381 to 401, 409 to 430, 433 to 454, 458 to 479, 482 to 502, 508 to 529, 532 to 553, 564 to 585, 588 to 609, and 612 to 633; these read SIQN…TFSG, NLTQ…SFSY, SLRY…SFYG, NLRY…ASHP, YLEY…TFTG, SLKY…TNET, PLLT…TFSW, QLRI…QEWR, NIFE…SFAL, SLQR…SPSP, NLTI…LLEG, NLEI…ANPG, HLHI…VFKN, ELKS…IFDD, and SLRS…VFGP. 3 N-linked (GlcNAc...) asparagine glycosylation sites follow: asparagine 399, asparagine 414, and asparagine 425. Asparagine 508 carries N-linked (GlcNAc...) asparagine glycosylation. The 54-residue stretch at 646–699 folds into the LRRCT domain; it reads NPFDCTCESISWFVNWINQTHTNISELSTHYLCNTPHHYYGFPLKLFDTSSCKD. Cystine bridges form between cysteine 650–cysteine 678 and cysteine 652–cysteine 697. N-linked (GlcNAc...) asparagine glycosylation is found at asparagine 663 and asparagine 668. A helical transmembrane segment spans residues 706-726; it reads LFIISTSMLLVFILVVLLIHI. Topologically, residues 727–905 are cytoplasmic; that stretch reads EGWRISFYWN…VALGSRNSAH (179 aa). Residues 755 to 898 enclose the TIR domain; that stretch reads FEYTAYIIHA…AFHHKLQVAL (144 aa). Phosphotyrosine is present on tyrosine 760. Residues lysine 766, lysine 813, and lysine 832 each participate in a glycyl lysine isopeptide (Lys-Gly) (interchain with G-Cter in ubiquitin) cross-link. Tyrosine 859 is modified (phosphotyrosine).

This sequence belongs to the Toll-like receptor family. In terms of assembly, monomer and homodimer; dimerization is triggered by ligand-binding, the signaling unit is composed of one ds-RNA of around 40 bp and two TLR3 molecules, and lateral clustering of signaling units along the length of the ds-RNA ligand is required for TLR3 signal transduction. Interacts (via transmembrane domain) with UNC93B1; the interaction is required for transport from the ER to the endosomes. Interacts with SRC; upon binding of double-stranded RNA. Interacts with TICAM1 (via the TIR domain) in response to poly(I:C) and this interaction is enhanced in the presence of WDFY1. The tyrosine-phosphorylated form (via TIR domain) interacts with WDFY1 (via WD repeat 2) in response to poly(I:C). Ubiquitinated by RNF170 at Lys-766 via 'Lys-48'-linked ubiquitin chains; leading to TLR3 proteasomal degradation. Post-translationally, TLR3 signaling requires a proteolytic cleavage mediated by cathepsins CTSB and CTSH, the cleavage occurs between amino acids 252 and 346. The cleaved form of TLR3 is the predominant form found in endosomes. Ubiquitinated by TRIM3; leading to recognition and sorting of polyubiquitinated TLR3 by the ESCRT complexes. Ubiquitinated by ZNRF1 via 'Lys-63'-linked ubiquitin chains; leading to TLR3 lysosomal trafficking and degradation. In terms of tissue distribution, highly expressed in lung. After intraperitoneal injection of lipopolysaccharide, highly expressed in brain, heart, kidney, liver, lung and spleen.

It localises to the endoplasmic reticulum membrane. Its subcellular location is the endosome membrane. The protein localises to the early endosome. In terms of biological role, key component of innate and adaptive immunity. TLRs (Toll-like receptors) control host immune response against pathogens through recognition of molecular patterns specific to microorganisms. TLR3 is a nucleotide-sensing TLR which is activated by double-stranded RNA, a sign of viral infection. Acts via the adapter TRIF/TICAM1, leading to NF-kappa-B activation, IRF3 nuclear translocation, cytokine secretion and the inflammatory response. The chain is Toll-like receptor 3 from Mus musculus (Mouse).